Reading from the N-terminus, the 344-residue chain is L-rhamnose-proton symporter (344 aa).

10 helical membrane passes run 4 to 24 (AITM…CFYA), 38 to 58 (WSIG…ALLL), 68 to 88 (FNLS…IGNI), 101 to 121 (MGIG…TPII), 137 to 157 (TLLG…AGQL), 175 to 195 (LLLA…MNAA), 214 to 234 (LPSY…FCFV), 259 to 279 (ILLS…YAWG), 290 to 310 (ISWM…GLVL), and 323 to 343 (VLSL…MGMA).

This sequence belongs to the L-rhamnose transporter (TC 2.A.7.6) family.

The protein resides in the cell inner membrane. The catalysed reaction is L-rhamnopyranose(in) + H(+)(in) = L-rhamnopyranose(out) + H(+)(out). In terms of biological role, uptake of L-rhamnose across the cytoplasmic membrane with the concomitant transport of protons into the cell (symport system). This Citrobacter koseri (strain ATCC BAA-895 / CDC 4225-83 / SGSC4696) protein is L-rhamnose-proton symporter.